The following is a 49-amino-acid chain: Multidrug efflux pump accessory protein AcrZ (49 aa).

The Periplasmic portion of the chain corresponds to 1 to 7 (MLELLKS). A helical membrane pass occupies residues 8-28 (LVFAVIMVPVVMAIILGLIYG). Topologically, residues 29-49 (LGEVFNIFSGVGKKDQPGQNH) are cytoplasmic.

It belongs to the AcrZ family. In terms of assembly, part of the AcrA-AcrB-AcrZ-TolC efflux pump, interacts directly with AcrB.

The protein resides in the cell inner membrane. AcrA-AcrB-AcrZ-TolC is a drug efflux protein complex with a broad substrate specificity. This protein binds to AcrB and is required for efflux of some but not all substrates, suggesting it may influence the specificity of drug export. In Escherichia coli O157:H7, this protein is Multidrug efflux pump accessory protein AcrZ.